Consider the following 289-residue polypeptide: Energy-coupling factor transporter ATP-binding protein EcfA2 (289 aa).

An ABC transporter domain is found at 3-246; that stretch reads IRFKQVDFTY…TQWLKEKQLG (244 aa). Residue 40–47 coordinates ATP; sequence GHTGSGKS.

The protein belongs to the ABC transporter superfamily. Energy-coupling factor EcfA family. Forms a stable energy-coupling factor (ECF) transporter complex composed of 2 membrane-embedded substrate-binding proteins (S component), 2 ATP-binding proteins (A component) and 2 transmembrane proteins (T component).

The protein localises to the cell membrane. Its function is as follows. ATP-binding (A) component of a common energy-coupling factor (ECF) ABC-transporter complex. Unlike classic ABC transporters this ECF transporter provides the energy necessary to transport a number of different substrates. The polypeptide is Energy-coupling factor transporter ATP-binding protein EcfA2 (Enterococcus faecalis (strain ATCC 700802 / V583)).